The following is a 374-amino-acid chain: Aclacinomycin 10-hydroxylase RdmB (374 aa).

S-adenosyl-L-methionine contacts are provided by Tyr171, Gly190, Glu213, Asp240, Phe241, and Ser255.

Belongs to the class I-like SAM-binding methyltransferase superfamily. Cation-independent O-methyltransferase family. In terms of assembly, homodimer. Homotetramer in solution. Tetramers might not be very stable in solution.

It catalyses the reaction 15-demethylaclacinomycin T + AH2 + O2 = 10-decarboxymethylaclacinomycin T + A + CO2 + H2O. The catalysed reaction is 10-carboxy-13-deoxycarminomycin + AH2 + O2 + H(+) = 10-hydroxy-13-deoxycarminomycin + A + CO2 + H2O. The enzyme catalyses 10-hydroxy-13-deoxycarminomycin + S-adenosyl-L-methionine = 10-hydroxy-13-deoxydaunorubicin + S-adenosyl-L-homocysteine + H(+). Its pathway is antibiotic biosynthesis; rhodomycin biosynthesis. It participates in antibiotic biosynthesis; aclacinomycin biosynthesis. Its activity is regulated as follows. The hydroxylation reaction requires S-adenosyl-L-methionine (SAM) as a cofactor. S-adenosine-L-homocysteine and sinefungin (a SAM analog) can also support the decarboxylative hydroxylation activity with 10-carboxy-13-deoxycarminomycin as substrate. SAM and its analogs are considered an essential structural ligand to maintain ternary structural integrity and the proper binding mode and orientation of electron-rich substrates during decarboxylative hydroxylation of C-10 by RdmB. Involved in the biosynthesis of anthracyclines, an important group of aromatic polyketide antibiotics used in cancer chemotherapy. Acts as a 10-hydroxylase to catalyze a decarboxylative hydroxylation reaction on anthracyclines. During biosynthesis of rhodomycin, it catalyzes the removal of the carboxylic group at the C-10 position of 15-demethoxy-epsilon-rhodomycin coupled to hydroxylation at the same C-10 position to yield beta-rhodomycin. In vitro, can also catalyze the removal of the carboxylic group at the C-10 position of 15-demethoxyaclacinomycin T coupled to hydroxylation at the same C-10 position to yield 10-decarboxymethylaclacinomycin T. It can also use 10-carboxy-13-deoxycarminomycin, an analog of 15-demethoxy-epsilon-rhodomycin, to yield 10-hydroxy-13-deoxycarminomycin. In terms of biological role, in addition to its hydroxylation activity, it can act in vitro as a S-adenosyl-L-methionine-dependent O-methyltransferase and catalyze the 4-O-methylation of 10-hydroxy-13-deoxycarminomycin to 10-hydroxy-13-deoxydaunorubicin. The triglycosyl group of anthracyclines prevents the methylation reaction. The chain is Aclacinomycin 10-hydroxylase RdmB from Streptomyces purpurascens.